A 110-amino-acid polypeptide reads, in one-letter code: Small ribosomal subunit protein uS17 (110 aa).

It belongs to the universal ribosomal protein uS17 family. Part of the 30S ribosomal subunit.

In terms of biological role, one of the primary rRNA binding proteins, it binds specifically to the 5'-end of 16S ribosomal RNA. The protein is Small ribosomal subunit protein uS17 of Petrotoga mobilis (strain DSM 10674 / SJ95).